Consider the following 128-residue polypeptide: Lutropin subunit beta (128 aa).

Disulfide bonds link Cys-18–Cys-66, Cys-32–Cys-81, Cys-35–Cys-119, Cys-43–Cys-97, Cys-47–Cys-99, and Cys-102–Cys-109. Residue Asn-22 is glycosylated (N-linked (GlcNAc...) asparagine).

Belongs to the glycoprotein hormones subunit beta family. In terms of assembly, heterodimer of a common alpha chain and a unique beta chain which confers biological specificity to thyrotropin, lutropin, follitropin and gonadotropin.

It localises to the secreted. Its function is as follows. Promotes spermatogenesis and ovulation by stimulating the testes and ovaries to synthesize steroids. This Struthio camelus (Common ostrich) protein is Lutropin subunit beta (LHB).